A 119-amino-acid chain; its full sequence is 5-hydroxyisourate hydrolase (119 aa).

Residues His-8, Arg-47, and Tyr-116 each coordinate substrate.

This sequence belongs to the transthyretin family. 5-hydroxyisourate hydrolase subfamily. In terms of assembly, homotetramer.

The catalysed reaction is 5-hydroxyisourate + H2O = 5-hydroxy-2-oxo-4-ureido-2,5-dihydro-1H-imidazole-5-carboxylate + H(+). The protein operates within purine metabolism; urate degradation; (S)-allantoin from urate: step 2/3. Catalyzes the hydrolysis of 5-hydroxyisourate (HIU) to 2-oxo-4-hydroxy-4-carboxy-5-ureidoimidazoline (OHCU). The polypeptide is 5-hydroxyisourate hydrolase (Halalkalibacterium halodurans (strain ATCC BAA-125 / DSM 18197 / FERM 7344 / JCM 9153 / C-125) (Bacillus halodurans)).